The chain runs to 175 residues: Ribosome maturation factor RimM (175 aa).

Residues Glu96–Phe175 form the PRC barrel domain.

Belongs to the RimM family. In terms of assembly, binds ribosomal protein uS19.

Its subcellular location is the cytoplasm. Its function is as follows. An accessory protein needed during the final step in the assembly of 30S ribosomal subunit, possibly for assembly of the head region. Essential for efficient processing of 16S rRNA. May be needed both before and after RbfA during the maturation of 16S rRNA. It has affinity for free ribosomal 30S subunits but not for 70S ribosomes. The sequence is that of Ribosome maturation factor RimM from Actinobacillus succinogenes (strain ATCC 55618 / DSM 22257 / CCUG 43843 / 130Z).